We begin with the raw amino-acid sequence, 304 residues long: Probable cobalamin biosynthesis protein CobD (304 aa).

5 consecutive transmembrane segments (helical) span residues Ile2–Ile22, Ile50–Leu70, Phe73–Thr93, Val147–Ile167, and Ala284–Leu304.

The protein belongs to the CobD/CbiB family.

The protein resides in the cell membrane. Its pathway is cofactor biosynthesis; adenosylcobalamin biosynthesis. Converts cobyric acid to cobinamide by the addition of aminopropanol on the F carboxylic group. This Thermoplasma volcanium (strain ATCC 51530 / DSM 4299 / JCM 9571 / NBRC 15438 / GSS1) protein is Probable cobalamin biosynthesis protein CobD.